The sequence spans 313 residues: Aspartate carbamoyltransferase catalytic subunit (313 aa).

The carbamoyl phosphate site is built by Arg53 and Thr54. Lys82 contacts L-aspartate. Positions 103, 131, and 134 each coordinate carbamoyl phosphate. L-aspartate-binding residues include Arg163 and Arg224. Carbamoyl phosphate-binding residues include Leu263 and Pro264.

The protein belongs to the aspartate/ornithine carbamoyltransferase superfamily. ATCase family. In terms of assembly, heterooligomer of catalytic and regulatory chains.

It catalyses the reaction carbamoyl phosphate + L-aspartate = N-carbamoyl-L-aspartate + phosphate + H(+). Its pathway is pyrimidine metabolism; UMP biosynthesis via de novo pathway; (S)-dihydroorotate from bicarbonate: step 2/3. In terms of biological role, catalyzes the condensation of carbamoyl phosphate and aspartate to form carbamoyl aspartate and inorganic phosphate, the committed step in the de novo pyrimidine nucleotide biosynthesis pathway. The sequence is that of Aspartate carbamoyltransferase catalytic subunit from Halorubrum lacusprofundi (strain ATCC 49239 / DSM 5036 / JCM 8891 / ACAM 34).